The following is a 122-amino-acid chain: Large ribosomal subunit protein bL12 (122 aa).

The protein belongs to the bacterial ribosomal protein bL12 family. In terms of assembly, homodimer. Part of the ribosomal stalk of the 50S ribosomal subunit. Forms a multimeric L10(L12)X complex, where L10 forms an elongated spine to which 2 to 4 L12 dimers bind in a sequential fashion. Binds GTP-bound translation factors.

Forms part of the ribosomal stalk which helps the ribosome interact with GTP-bound translation factors. Is thus essential for accurate translation. This chain is Large ribosomal subunit protein bL12, found in Vibrio campbellii (strain ATCC BAA-1116).